The primary structure comprises 346 residues: Ribosomal RNA small subunit methyltransferase H (346 aa).

S-adenosyl-L-methionine contacts are provided by residues G47–Y49, D65, F92, D113, and Q120. The interval A294–S346 is disordered. The span at R314–G327 shows a compositional bias: basic and acidic residues. Residues D328–L337 show a composition bias toward low complexity.

It belongs to the methyltransferase superfamily. RsmH family.

The protein localises to the cytoplasm. It catalyses the reaction cytidine(1402) in 16S rRNA + S-adenosyl-L-methionine = N(4)-methylcytidine(1402) in 16S rRNA + S-adenosyl-L-homocysteine + H(+). Functionally, specifically methylates the N4 position of cytidine in position 1402 (C1402) of 16S rRNA. This chain is Ribosomal RNA small subunit methyltransferase H, found in Azorhizobium caulinodans (strain ATCC 43989 / DSM 5975 / JCM 20966 / LMG 6465 / NBRC 14845 / NCIMB 13405 / ORS 571).